The chain runs to 417 residues: Cytoplasmic tRNA 2-thiolation protein 2 (417 aa).

A compositionally biased stretch (acidic residues) spans 1-11 (MCSIVEDDFGD). Residues 1–24 (MCSIVEDDFGDEGGAHAMKEDTPQ) are disordered. Over residues 13–22 (GGAHAMKEDT) the composition is skewed to basic and acidic residues.

The protein belongs to the CTU2/NCS2 family.

It is found in the cytoplasm. Its pathway is tRNA modification; 5-methoxycarbonylmethyl-2-thiouridine-tRNA biosynthesis. Its function is as follows. Plays a central role in 2-thiolation of mcm(5)S(2)U at tRNA wobble positions of tRNA(Lys), tRNA(Glu) and tRNA(Gln). May act by forming a heterodimer with NCS6/CTU1 that ligates sulfur from thiocarboxylated URM1 onto the uridine of tRNAs at wobble position. The protein is Cytoplasmic tRNA 2-thiolation protein 2 of Anopheles gambiae (African malaria mosquito).